The sequence spans 1238 residues: Protein translocase subunit SecA 1 (1238 aa).

Residues Q107, 125-129 (GEGKT), and D570 each bind ATP. The disordered stretch occupies residues 1194-1220 (AAGSEGRAEGSVDTVRVEEPRIGRNAP). Residues 1199–1215 (GRAEGSVDTVRVEEPRI) show a composition bias toward basic and acidic residues. Positions 1221, 1223, 1232, and 1233 each coordinate Zn(2+).

Belongs to the SecA family. Monomer and homodimer. Part of the essential Sec protein translocation apparatus which comprises SecA, SecYEG and auxiliary proteins SecDF. Other proteins may also be involved. It depends on Zn(2+) as a cofactor.

It localises to the cell inner membrane. It is found in the cytoplasm. The enzyme catalyses ATP + H2O + cellular proteinSide 1 = ADP + phosphate + cellular proteinSide 2.. In terms of biological role, part of the Sec protein translocase complex. Interacts with the SecYEG preprotein conducting channel. Has a central role in coupling the hydrolysis of ATP to the transfer of proteins into and across the cell membrane, serving as an ATP-driven molecular motor driving the stepwise translocation of polypeptide chains across the membrane. The chain is Protein translocase subunit SecA 1 from Rhodopirellula baltica (strain DSM 10527 / NCIMB 13988 / SH1).